We begin with the raw amino-acid sequence, 237 residues long: MAKYTDITNSAIATIVAEIITLPICTFKTNYQNNSTLSMQQCLKNIYMKNGISGFYKASVPAIMSQTYSTSSKYFLFRFFENKNYPYTNKMINGIISGIMTSLITHPIDNIKIHLQMNDSFMCKLRENGFGLFYRGYSKSFGKTVISSSMFFPLYETLNEYFEKPVVSSMLTAIISTTIMQPLDFLKTRHIYGLSLYNGLNLQHYYRGLSLNLMRIVPHFVITMTTIDFLNKKTLQY.

Solcar repeat units follow at residues 1–83, 85–161, and 164–233; these read MAKY…FENK, YPYT…LNEY, and KPVV…LNKK. A run of 5 helical transmembrane segments spans residues 11–27, 60–76, 91–108, 140–160, and 166–183; these read AIAT…ICTF, VPAI…KYFL, MING…THPI, SFGK…TLNE, and VVSS…MQPL. Positions 191 to 196 match the Substrate recognition motif; it reads IYGLSL. A helical membrane pass occupies residues 205–226; it reads YYRGLSLNLMRIVPHFVITMTT.

The protein belongs to the mitochondrial carrier (TC 2.A.29) family.

Its subcellular location is the host mitochondrion inner membrane. Functionally, transports dATP and to a lesser extent dTTP, TTP, UTP and ADP, possibly across the mitochondrial inner membrane. The sequence is that of Mitochondrial carrier-like protein L276 from Acanthamoeba polyphaga (Amoeba).